A 351-amino-acid polypeptide reads, in one-letter code: MSRLLHAEEWAEVKELGDHHRHPQPHHVPPLTPQPPATLQARDLPVYPAELSLLDSTDPRAWLTPTLQGLCTARAAQYLLHSPELGASEAAAPRDEADSQGELVRRSGCGGLSKSPGPVKVREQLCKLKGGVVVDELGCSRQRAPSSKQVNGVQKQRRLAANARERRRMHGLNHAFDQLRNVIPSFNNDKKLSKYETLQMAQIYINALSELLQTPNVGEQPPPPTASCKNDHHHLRTASSYEGGAGASAVAGAQPAPGGGPRPTPPGPCRTRFSGPASSGGYSVQLDALHFPAFEDRALTAMMAQKDLSPSLPGGILQPVQEDNSKTSPRSHRSDGEFSPHSHYSDSDEAS.

Disordered regions lie at residues 16–39 (LGDH…PATL) and 89–116 (EAAA…SKSP). The segment covering 26–36 (HHVPPLTPQPP) has biased composition (pro residues). The bHLH domain occupies 156–208 (QRRLAANARERRRMHGLNHAFDQLRNVIPSFNNDKKLSKYETLQMAQIYINAL). Disordered stretches follow at residues 244–278 (GAGA…GPAS) and 308–351 (LSPS…DEAS). The span at 247 to 256 (ASAVAGAQPA) shows a compositional bias: low complexity. Residues 258-268 (GGGPRPTPPGP) show a composition bias toward pro residues. Over residues 332–351 (HRSDGEFSPHSHYSDSDEAS) the composition is skewed to basic and acidic residues.

As to quaternary structure, efficient DNA binding requires dimerization with another bHLH protein. As to expression, developing nervous system, and in adult epithelial cells of the gastrointestinal tract.

It is found in the nucleus. In terms of biological role, transcriptional regulator. Activates E box-dependent transcription in collaboration with TCF3/E47, but the activity is completely antagonized by the negative regulator of neurogenesis HES1. Plays a role in the differentiation of subsets of neural cells by activating E box-dependent transcription. The chain is Transcription factor Atoh1 from Mus musculus (Mouse).